The primary structure comprises 404 residues: Chorismate synthase (404 aa).

2 residues coordinate NADP(+): R40 and R46. Residues 133–135, 266–267, G313, 328–332, and R354 contribute to the FMN site; these read RSS, QA, and KPIPT. A disordered region spans residues 283–320; the sequence is PGSQVHDPIEPREDGAQAYPRRTNHAGGTEGGTTTGMP. A disordered region spans residues 337–357; sequence LDSVDTATGEPEPTRYERSDI.

This sequence belongs to the chorismate synthase family. In terms of assembly, homotetramer. Requires FMNH2 as cofactor.

It catalyses the reaction 5-O-(1-carboxyvinyl)-3-phosphoshikimate = chorismate + phosphate. Its pathway is metabolic intermediate biosynthesis; chorismate biosynthesis; chorismate from D-erythrose 4-phosphate and phosphoenolpyruvate: step 7/7. Its function is as follows. Catalyzes the anti-1,4-elimination of the C-3 phosphate and the C-6 proR hydrogen from 5-enolpyruvylshikimate-3-phosphate (EPSP) to yield chorismate, which is the branch point compound that serves as the starting substrate for the three terminal pathways of aromatic amino acid biosynthesis. This reaction introduces a second double bond into the aromatic ring system. The sequence is that of Chorismate synthase from Salinibacter ruber (strain DSM 13855 / M31).